The primary structure comprises 340 residues: Protein HP_1247 (340 aa).

Seems to interact with H.pylori HolB.

In terms of biological role, could be the functional equivalent of DNA polymerase III delta subunit (HolA). The protein is Protein HP_1247 of Helicobacter pylori (strain ATCC 700392 / 26695) (Campylobacter pylori).